A 249-amino-acid polypeptide reads, in one-letter code: Undecaprenyl-diphosphatase (249 aa).

8 helical membrane-spanning segments follow: residues 11–31 (GLTE…TAIF), 35–55 (PDVG…LIFV), 80–100 (LVLS…FIES), 101–121 (VFSS…LMLL), 135–155 (IPYF…LPGI), 180–200 (FLMS…NVAF), 202–222 (TEQI…LYLV), and 226–246 (VIGG…FFVL).

It belongs to the UppP family.

It localises to the cell membrane. It carries out the reaction di-trans,octa-cis-undecaprenyl diphosphate + H2O = di-trans,octa-cis-undecaprenyl phosphate + phosphate + H(+). Its function is as follows. Catalyzes the dephosphorylation of undecaprenyl diphosphate (UPP). The polypeptide is Undecaprenyl-diphosphatase (Methanococcus maripaludis (strain C7 / ATCC BAA-1331)).